Here is a 170-residue protein sequence, read N- to C-terminus: Disulfide bond formation protein B (170 aa).

Residues 1–14 (MNDSTLALRRERRL) are Cytoplasmic-facing. The chain crosses the membrane as a helical span at residues 15-31 (LMLLGWVCIALLAGALY). At 32-49 (LQYVKNEDPCPLCIIQRY) the chain is on the periplasmic side. Cys41 and Cys44 are oxidised to a cystine. Residues 50–64 (FFAAIGIFAFLAAGI) traverse the membrane as a helical segment. Residues 65 to 71 (RNWRVIW) lie on the Cytoplasmic side of the membrane. The chain crosses the membrane as a helical span at residues 72 to 89 (VFELLIAIAAAGGVGTAA). Over 90 to 144 (RHLSIQMNPGFSCGFDTLQPIVDSLPPAQWFPGMFKVAGLCETVYPPIFGILLPG) the chain is Periplasmic. A disulfide bridge connects residues Cys102 and Cys130. A helical transmembrane segment spans residues 145–163 (WALIGFAVILVAVASSLWR). Topologically, residues 164–170 (HRRKLAG) are cytoplasmic.

The protein belongs to the DsbB family.

It is found in the cell inner membrane. Required for disulfide bond formation in some periplasmic proteins. Acts by oxidizing the DsbA protein. The protein is Disulfide bond formation protein B of Burkholderia ambifaria (strain ATCC BAA-244 / DSM 16087 / CCUG 44356 / LMG 19182 / AMMD) (Burkholderia cepacia (strain AMMD)).